A 464-amino-acid chain; its full sequence is Cysteine--tRNA ligase (464 aa).

Cysteine 27 is a binding site for Zn(2+). Positions 29-39 (PTVYDDAHLGH) match the 'HIGH' region motif. Zn(2+) contacts are provided by cysteine 203, histidine 234, and glutamate 238. Positions 266–270 (KMSKS) match the 'KMSKS' region motif. ATP is bound at residue lysine 269.

Belongs to the class-I aminoacyl-tRNA synthetase family. As to quaternary structure, monomer. Zn(2+) is required as a cofactor.

It is found in the cytoplasm. It catalyses the reaction tRNA(Cys) + L-cysteine + ATP = L-cysteinyl-tRNA(Cys) + AMP + diphosphate. This chain is Cysteine--tRNA ligase, found in Campylobacter concisus (strain 13826).